The sequence spans 114 residues: Iron-sulfur cluster insertion protein ErpA (114 aa).

The iron-sulfur cluster site is built by C42, C106, and C108.

This sequence belongs to the HesB/IscA family. Homodimer. Iron-sulfur cluster is required as a cofactor.

Functionally, required for insertion of 4Fe-4S clusters for at least IspG. This is Iron-sulfur cluster insertion protein ErpA from Hamiltonella defensa subsp. Acyrthosiphon pisum (strain 5AT).